We begin with the raw amino-acid sequence, 88 residues long: Small integral membrane protein 13 (88 aa).

Residues 10–30 form a helical membrane-spanning segment; sequence LVFVATLLIVLLLMVCGWYFV. Positions 48-61 are enriched in polar residues; sequence TGSQEGDNEQPSGS. Residues 48–88 are disordered; the sequence is TGSQEGDNEQPSGSETEEDPSASPQKIRSARQRRPPVDAGH. 2 positions are modified to phosphoserine: S59 and S61. A Phosphothreonine modification is found at T63. At S70 the chain carries Phosphoserine.

This sequence belongs to the SMIM13 family.

It is found in the membrane. In Mus musculus (Mouse), this protein is Small integral membrane protein 13 (Smim13).